A 282-amino-acid polypeptide reads, in one-letter code: Biotin synthase (282 aa).

Residues Met-1 to Arg-228 form the Radical SAM core domain. Residues Cys-17, Cys-21, and Cys-24 each contribute to the [4Fe-4S] cluster site. [2Fe-2S] cluster contacts are provided by Cys-61, Cys-96, Cys-154, and Arg-221.

This sequence belongs to the radical SAM superfamily. Biotin synthase family. As to quaternary structure, homodimer. Requires [4Fe-4S] cluster as cofactor. [2Fe-2S] cluster serves as cofactor.

It catalyses the reaction (4R,5S)-dethiobiotin + (sulfur carrier)-SH + 2 reduced [2Fe-2S]-[ferredoxin] + 2 S-adenosyl-L-methionine = (sulfur carrier)-H + biotin + 2 5'-deoxyadenosine + 2 L-methionine + 2 oxidized [2Fe-2S]-[ferredoxin]. Its pathway is cofactor biosynthesis; biotin biosynthesis; biotin from 7,8-diaminononanoate: step 2/2. Functionally, catalyzes the conversion of dethiobiotin (DTB) to biotin by the insertion of a sulfur atom into dethiobiotin via a radical-based mechanism. The protein is Biotin synthase of Helicobacter pylori (strain Shi470).